The primary structure comprises 252 residues: Type III pantothenate kinase (252 aa).

Asp6–Thr13 serves as a coordination point for ATP. Substrate is bound at residue Gly104–Arg107. The Proton acceptor role is filled by Asp106. Residue Asp126 participates in K(+) binding. Thr129 lines the ATP pocket. Thr180 contacts substrate.

It belongs to the type III pantothenate kinase family. Homodimer. The cofactor is NH4(+). K(+) is required as a cofactor.

Its subcellular location is the cytoplasm. The catalysed reaction is (R)-pantothenate + ATP = (R)-4'-phosphopantothenate + ADP + H(+). Its pathway is cofactor biosynthesis; coenzyme A biosynthesis; CoA from (R)-pantothenate: step 1/5. In terms of biological role, catalyzes the phosphorylation of pantothenate (Pan), the first step in CoA biosynthesis. This chain is Type III pantothenate kinase, found in Fervidobacterium nodosum (strain ATCC 35602 / DSM 5306 / Rt17-B1).